Reading from the N-terminus, the 266-residue chain is Translation initiation factor 2 subunit alpha (266 aa).

The 72-residue stretch at 12-83 folds into the S1 motif domain; it reads GEILIATVKQ…RKGTVDVSLK (72 aa).

It belongs to the eIF-2-alpha family. Heterotrimer composed of an alpha, a beta and a gamma chain.

EIF-2 functions in the early steps of protein synthesis by forming a ternary complex with GTP and initiator tRNA. In Saccharolobus islandicus (strain Y.N.15.51 / Yellowstone #2) (Sulfolobus islandicus), this protein is Translation initiation factor 2 subunit alpha.